Reading from the N-terminus, the 507-residue chain is Sugar transport protein 6 (507 aa).

Residues M1–Y20 are Cytoplasmic-facing. The next 12 helical transmembrane spans lie at V21 to I41, F78 to S98, I115 to I135, L138 to I158, G165 to V185, I199 to I219, F280 to F300, L318 to V338, F345 to L365, L381 to L401, G418 to L438, and G447 to I467. Residues P468–A507 are Cytoplasmic-facing.

The protein belongs to the major facilitator superfamily. Sugar transporter (TC 2.A.1.1) family. In terms of tissue distribution, pollen specific.

It is found in the membrane. Its activity is regulated as follows. Inhibited by uncouplers such as 2,4-dinitrophenol and carbonyl cyanide-m-chlorophenyl-hydrazone. Mediates an active uptake of hexoses, probably by sugar/hydrogen symport. Can transport glucose, 3-O-methylglucose, mannose, fructose and galactose, and, to a lower extent, xylose and ribulose. The sequence is that of Sugar transport protein 6 (STP6) from Arabidopsis thaliana (Mouse-ear cress).